The following is a 58-amino-acid chain: Small ribosomal subunit protein bS21 (58 aa).

Residues 27-58 (GTLQELRKREHYEKPSVKRKRKSEAARKRKKY) are disordered. Residues 31–42 (ELRKREHYEKPS) are compositionally biased toward basic and acidic residues. Basic residues predominate over residues 43–58 (VKRKRKSEAARKRKKY).

This sequence belongs to the bacterial ribosomal protein bS21 family.

This chain is Small ribosomal subunit protein bS21 (rpsU), found in Lactococcus lactis subsp. lactis (strain IL1403) (Streptococcus lactis).